Here is an 87-residue protein sequence, read N- to C-terminus: Kappa-6-bungarotoxin (87 aa).

The N-terminal stretch at 1–21 is a signal peptide; it reads MKTLLLSLVVVTIVCLDLGYT. Intrachain disulfides connect Cys-24-Cys-42, Cys-35-Cys-63, Cys-48-Cys-52, Cys-67-Cys-79, and Cys-80-Cys-85.

Belongs to the three-finger toxin family. Long-chain subfamily. Kappa-neurotoxin sub-subfamily. Homo- and heterodimer; non-covalently linked. Expressed by the venom gland.

The protein resides in the secreted. Postsynaptic neurotoxin that binds and inhibits neuronal nicotinic acetylcholine receptors (nAChR) with high affinity (IC(50)&lt;100 nM). Is a selective, and slowly reversible antagonist of alpha-3/CHRNA3-containing and some alpha-4/CHRNA4-containing AChRs. This chain is Kappa-6-bungarotoxin, found in Bungarus multicinctus (Many-banded krait).